Consider the following 341-residue polypeptide: Two-component response regulator ORR30 (341 aa).

The 116-residue stretch at 12–127 (RVLVIDDDCS…ELSNIWQHIF (116 aa)) folds into the Response regulatory domain. Position 63 is a 4-aspartylphosphate (Asp-63). An HTH myb-type domain is found at 195–254 (DLGKSRLTWTTQLHRQFIAAVNHLGEDKAVPKKILGIMKVKHLTREQVASHLQKYRMQLK). A DNA-binding region (H-T-H motif) is located at residues 225–250 (PKKILGIMKVKHLTREQVASHLQKYR).

This sequence belongs to the ARR family. Type-B subfamily. In terms of processing, two-component system major event consists of a His-to-Asp phosphorelay between a sensor histidine kinase (HK) and a response regulator (RR). In plants, the His-to-Asp phosphorelay involves an additional intermediate named Histidine-containing phosphotransfer protein (HPt). This multistep phosphorelay consists of a His-Asp-His-Asp sequential transfer of a phosphate group between first a His and an Asp of the HK protein, followed by the transfer to a conserved His of the HPt protein and finally the transfer to an Asp in the receiver domain of the RR protein.

Its subcellular location is the nucleus. Functionally, transcriptional activator that acts as a floral inducer to promote short-day (SD) flowering pathway. Activates HD3A and other FT-like genes independently from HD1. May also activate MADS-box transcription factors involved in flowering regulation. Functions as a response regulator involved in His-to-Asp phosphorelay signal transduction system. Phosphorylation of the Asp residue in the receiver domain activates the ability of the protein to promote the transcription of target genes. May directly activate some type-A response regulators in response to cytokinins. This is Two-component response regulator ORR30 from Oryza sativa subsp. japonica (Rice).